Reading from the N-terminus, the 157-residue chain is MSKEIILTQEGLEELKAELKNLLEVTRPKVIEELVEARNQGDLSENADYDAARNRQAEVEARIKEVETLINRAKVIDNSKTHSTGEVKIGSTVEFLSSLDHKTKEIKIVGAIEADPFSRLISNESPIAKAILGKKIGDTVEIKDILKPYKITIKSIK.

Positions 1-75 (MSKEIILTQE…VETLINRAKV (75 aa)) form a coiled coil.

Belongs to the GreA/GreB family.

Necessary for efficient RNA polymerase transcription elongation past template-encoded arresting sites. The arresting sites in DNA have the property of trapping a certain fraction of elongating RNA polymerases that pass through, resulting in locked ternary complexes. Cleavage of the nascent transcript by cleavage factors such as GreA or GreB allows the resumption of elongation from the new 3'terminus. GreA releases sequences of 2 to 3 nucleotides. The polypeptide is Transcription elongation factor GreA (Mycoplasma capricolum subsp. capricolum (strain California kid / ATCC 27343 / NCTC 10154)).